The primary structure comprises 286 residues: Single myb histone 5 (286 aa).

The 61-residue stretch at 1 to 61 (MGAPKQRWTS…KWRNMNVIVT (61 aa)) folds into the HTH myb-type domain. Residues 28–57 (WRMILNDPELSSTLRYRSNVDLKDKWRNMN) constitute a DNA-binding region (H-T-H motif). One can recognise an H15 domain in the interval 122 to 190 (SHSRLDNIIM…KVNRKYRIAP (69 aa)). Residues 229–277 (EAAAAAAAHAVAEAEAIMAEAEAAAREAEAAEAEARAAQAFAEAAVLTL) adopt a coiled-coil conformation.

It belongs to the histone H1/H5 family. SMH subfamily. As to quaternary structure, forms a homodimer and heterodimers.

It is found in the nucleus. The protein resides in the chromosome. The protein localises to the nucleolus. It localises to the telomere. In terms of biological role, binds preferentially double-stranded telomeric repeats, but may also bind to the single telomeric strand. This is Single myb histone 5 (SMH5) from Zea mays (Maize).